The sequence spans 197 residues: Ras-related protein RabG2 (197 aa).

GTP is bound by residues 13 to 20 (GDSAVGKT), 61 to 65 (DTAGQ), and 119 to 122 (NKCD). Residues 175–197 (SKPSVVNPGSGGTSNTGGKKKFC) form a disordered region. Residue cysteine 197 is the site of S-geranylgeranyl cysteine attachment.

The protein belongs to the small GTPase superfamily. Rab family.

Its subcellular location is the cell membrane. This Dictyostelium discoideum (Social amoeba) protein is Ras-related protein RabG2 (rabG2).